Consider the following 81-residue polypeptide: Putative defensin-like protein 265 (81 aa).

A signal peptide spans 1–26; the sequence is MEKTVSRKVVVLAILLSLSCLCIAKA. 3 cysteine pairs are disulfide-bonded: cysteine 48–cysteine 66, cysteine 54–cysteine 71, and cysteine 58–cysteine 73.

Belongs to the DEFL family.

Its subcellular location is the secreted. In Arabidopsis thaliana (Mouse-ear cress), this protein is Putative defensin-like protein 265.